The following is a 258-amino-acid chain: Phosphate import ATP-binding protein PstB (258 aa).

In terms of domain architecture, ABC transporter spans 13–253 (IKIENLNLWY…PREKSTEDYI (241 aa)). Position 45 to 52 (45 to 52 (GPSGCGKS)) interacts with ATP.

This sequence belongs to the ABC transporter superfamily. Phosphate importer (TC 3.A.1.7) family. In terms of assembly, the complex is composed of two ATP-binding proteins (PstB), two transmembrane proteins (PstC and PstA) and a solute-binding protein (PstS).

It is found in the cell membrane. The catalysed reaction is phosphate(out) + ATP + H2O = ADP + 2 phosphate(in) + H(+). Its function is as follows. Part of the ABC transporter complex PstSACB involved in phosphate import. Responsible for energy coupling to the transport system. The protein is Phosphate import ATP-binding protein PstB of Methanosarcina barkeri (strain Fusaro / DSM 804).